The following is a 352-amino-acid chain: Transcription factor MYB51 (352 aa).

HTH myb-type domains are found at residues 10–62 (ELGL…ANYL) and 63–117 (RPDI…KKRL). 2 DNA-binding regions (H-T-H motif) span residues 38–62 (WRTLPEKAGLKRCGKSCRLRWANYL) and 90–113 (WSAIARGLPGRTDNEIKNYWNTHI). Disordered stretches follow at residues 128–157 (KGITSGTDKSENLPEKQNVNLTTSDHDLDN) and 198–219 (GGPLASTSHTTNTTTTSVSVDS). Residues 203 to 219 (STSHTTNTTTTSVSVDS) show a composition bias toward low complexity.

Can form complexes with MYC2, MYC3 or MYC4. Expressed in vegetative parts of the plant, mainly in mature rosette leaves and in trichomes. Detected in roots, but not in mature flowers or siliques.

It is found in the nucleus. Transcription factor positively regulating indolic glucosinolate biosynthetic pathway genes. In Arabidopsis thaliana (Mouse-ear cress), this protein is Transcription factor MYB51 (MYB51).